We begin with the raw amino-acid sequence, 513 residues long: ATP synthase subunit alpha (513 aa).

169 to 176 (GDRQIGKT) is an ATP binding site.

The protein belongs to the ATPase alpha/beta chains family. As to quaternary structure, F-type ATPases have 2 components, CF(1) - the catalytic core - and CF(0) - the membrane proton channel. CF(1) has five subunits: alpha(3), beta(3), gamma(1), delta(1), epsilon(1). CF(0) has three main subunits: a(1), b(2) and c(9-12). The alpha and beta chains form an alternating ring which encloses part of the gamma chain. CF(1) is attached to CF(0) by a central stalk formed by the gamma and epsilon chains, while a peripheral stalk is formed by the delta and b chains.

It localises to the cell inner membrane. The enzyme catalyses ATP + H2O + 4 H(+)(in) = ADP + phosphate + 5 H(+)(out). In terms of biological role, produces ATP from ADP in the presence of a proton gradient across the membrane. The alpha chain is a regulatory subunit. The polypeptide is ATP synthase subunit alpha (Francisella tularensis subsp. novicida (strain U112)).